The chain runs to 121 residues: UPF0102 protein BHWA1_02005 (121 aa).

The protein belongs to the UPF0102 family.

The sequence is that of UPF0102 protein BHWA1_02005 from Brachyspira hyodysenteriae (strain ATCC 49526 / WA1).